The sequence spans 594 residues: E3 ubiquitin-protein ligase TRAF7 (594 aa).

The tract at residues 1-33 is disordered; sequence MPPINTPRRSDSAISVRSLHSESSMSLRSTFSL. Serine 12 and serine 15 each carry phosphoserine. Positions 15–29 are enriched in low complexity; sequence SVRSLHSESSMSLRS. The RING-type zinc-finger motif lies at 55–89; that stretch reads CQLCCSVFKDPVITTCGHTFCRRCALKSEKCPVDN. The segment at 146 to 216 adopts a TRAF-type zinc-finger fold; the sequence is HESSCDYRPV…RFEGLKEFLQ (71 aa). 7 WD repeats span residues 318–357, 361–398, 401–437, 439–478, 481–518, 521–562, and 565–593; these read GHQG…KCQK, GHDG…KVNT, AHDN…LKLK, ELTG…CIHV, TSGG…QVRT, GHVG…CTQT, and RHQG…KVWT.

Belongs to the WD repeat TRAF7 family. Homodimer. Interacts with MAP3K3 and promotes the kinase activity of this enzyme. In terms of processing, phosphorylated by MAP3K3. Ubiquitinates itself upon phosphorylation. In terms of tissue distribution, ubiquitously expressed. Expression is relatively high in heart, liver, kidney, testis, prostate, thyroid, and salivary gland.

It is found in the cytoplasmic vesicle. The protein localises to the cytoplasm. The protein resides in the nucleus. It carries out the reaction S-ubiquitinyl-[E2 ubiquitin-conjugating enzyme]-L-cysteine + [acceptor protein]-L-lysine = [E2 ubiquitin-conjugating enzyme]-L-cysteine + N(6)-ubiquitinyl-[acceptor protein]-L-lysine.. It participates in protein modification; protein ubiquitination. In terms of biological role, E3 ubiquitin and SUMO-protein ligase that plays a role in different biological processes such as innate immunity, inflammation or apoptosis. Potentiates MAP3K3-mediated activation of the NF-kappa-B, JUN/AP1 and DDIT3 transcriptional regulators. Negatively regulates MYB transcriptional activity by sequestering it to the cytosol via SUMOylation. Plays a role in the phosphorylation of MAPK1 and/or MAPK3, probably via its interaction with MAP3K3. Negatively regulates RLR-mediated innate immunity by promoting 'Lys-48'-linked ubiquitination of TBK1 through its RING domain to inhibit the cellular antiviral response. Promotes 'Lys-29'-linked polyubiquitination of NEMO/IKBKG and RELA leading to targeting these two proteins to lysosomal degradative pathways, reducing the transcriptional activity of NF-kappa-B. This is E3 ubiquitin-protein ligase TRAF7 from Mus musculus (Mouse).